The primary structure comprises 393 residues: S-adenosylmethionine synthase (393 aa).

Residue histidine 16 coordinates ATP. Mg(2+) is bound at residue aspartate 18. Glutamate 44 is a K(+) binding site. The L-methionine site is built by glutamate 57 and glutamine 100. The segment at 100–110 (QSNDIAQGVDH) is flexible loop. Residues 167–169 (DAK), 238–239 (RF), aspartate 247, 253–254 (RK), alanine 270, and lysine 274 contribute to the ATP site. L-methionine is bound at residue aspartate 247. Lysine 278 is a binding site for L-methionine.

The protein belongs to the AdoMet synthase family. As to quaternary structure, homotetramer; dimer of dimers. The cofactor is Mg(2+). K(+) is required as a cofactor.

It localises to the cytoplasm. It catalyses the reaction L-methionine + ATP + H2O = S-adenosyl-L-methionine + phosphate + diphosphate. It functions in the pathway amino-acid biosynthesis; S-adenosyl-L-methionine biosynthesis; S-adenosyl-L-methionine from L-methionine: step 1/1. Catalyzes the formation of S-adenosylmethionine (AdoMet) from methionine and ATP. The overall synthetic reaction is composed of two sequential steps, AdoMet formation and the subsequent tripolyphosphate hydrolysis which occurs prior to release of AdoMet from the enzyme. The protein is S-adenosylmethionine synthase of Polaromonas sp. (strain JS666 / ATCC BAA-500).